The primary structure comprises 363 residues: 3-ketodihydrosphingosine reductase TSC10 (363 aa).

An NADP(+)-binding site is contributed by Leu10. Residues Gly13, Ser15, and Gly17 each coordinate NADPH. The short motif at 13–17 is the GXSXG element; that stretch reads GGSQG. Residue Leu18 coordinates NADP(+). Positions 40, 44, 131, and 132 each coordinate NADPH. An NADP(+)-binding site is contributed by Asp131. Residue Ser206 is the Proton donor of the active site. The NADP(+) site is built by Tyr220, Lys224, and Ser253. Catalysis depends on Tyr220, which acts as the Proton acceptor. Lys224 serves as the catalytic Lowers pKa of active site Tyr. The chain crosses the membrane as a helical span at residues 324 to 344; that stretch reads FVQWLIGVIANLLVVPFYMVL.

This sequence belongs to the short-chain dehydrogenases/reductases (SDR) family.

The protein resides in the endoplasmic reticulum membrane. The enzyme catalyses sphinganine + NADP(+) = 3-oxosphinganine + NADPH + H(+). It participates in lipid metabolism; sphingolipid metabolism. Catalyzes the reduction of 3'-oxosphinganine (3-ketodihydrosphingosine/KDS) to sphinganine (dihydrosphingosine/DHS), the second step of de novo sphingolipid biosynthesis. The polypeptide is 3-ketodihydrosphingosine reductase TSC10 (TSC10) (Candida glabrata (strain ATCC 2001 / BCRC 20586 / JCM 3761 / NBRC 0622 / NRRL Y-65 / CBS 138) (Yeast)).